The sequence spans 457 residues: Subtilisin-like serine protease Pen c 2 (457 aa).

The signal sequence occupies residues 1 to 16; the sequence is MKGFLGLALLPLLTAA. Residues 17–136 constitute a propeptide, removed in mature form; sequence SPVSVESIHN…IEKDSEVHHF (120 aa). One can recognise an Inhibitor I9 domain in the interval 43 to 134; that stretch reads SYIVVFKKHV…DYIEKDSEVH (92 aa). The Peptidase S8 domain occupies 146-457; that stretch reads PWGLARISHR…YTDIVAQGGY (312 aa). Active-site charge relay system residues include Asp-182 and His-214. Residues Asn-244 and Asn-284 are each glycosylated (N-linked (GlcNAc...) asparagine). Ser-380 serves as the catalytic Charge relay system. A glycan (N-linked (GlcNAc...) asparagine) is linked at Asn-447.

The protein belongs to the peptidase S8 family.

In terms of biological role, serine protease. The protein is Subtilisin-like serine protease Pen c 2 of Penicillium citrinum.